The sequence spans 203 residues: Holliday junction branch migration complex subunit RuvA (203 aa).

A domain I region spans residues 1–63 (MIFSVRGEVL…EDSMTLYGFS (63 aa)). A domain II region spans residues 64–141 (DAENRDLFLA…GPVGASGLTV (78 aa)). The flexible linker stretch occupies residues 141-145 (VGTAA). Positions 146–203 (DGNAVRGSVVEALVGLGFAAKQAEEATDQVLDGELGKDGAVATSSALRAALSLLGKTR) are domain III.

The protein belongs to the RuvA family. In terms of assembly, homotetramer. Forms an RuvA(8)-RuvB(12)-Holliday junction (HJ) complex. HJ DNA is sandwiched between 2 RuvA tetramers; dsDNA enters through RuvA and exits via RuvB. An RuvB hexamer assembles on each DNA strand where it exits the tetramer. Each RuvB hexamer is contacted by two RuvA subunits (via domain III) on 2 adjacent RuvB subunits; this complex drives branch migration. In the full resolvosome a probable DNA-RuvA(4)-RuvB(12)-RuvC(2) complex forms which resolves the HJ.

Its subcellular location is the cytoplasm. In terms of biological role, the RuvA-RuvB-RuvC complex processes Holliday junction (HJ) DNA during genetic recombination and DNA repair, while the RuvA-RuvB complex plays an important role in the rescue of blocked DNA replication forks via replication fork reversal (RFR). RuvA specifically binds to HJ cruciform DNA, conferring on it an open structure. The RuvB hexamer acts as an ATP-dependent pump, pulling dsDNA into and through the RuvAB complex. HJ branch migration allows RuvC to scan DNA until it finds its consensus sequence, where it cleaves and resolves the cruciform DNA. This Mycobacterium leprae (strain Br4923) protein is Holliday junction branch migration complex subunit RuvA.